The following is a 428-amino-acid chain: Tyrosine--tRNA ligase (428 aa).

An L-tyrosine-binding site is contributed by Tyr36. The 'HIGH' region signature appears at 41 to 50; the sequence is PTARSLHIGS. The L-tyrosine site is built by Tyr169 and Gln173. The 'KMSKS' region motif lies at 229-233; it reads KMGKT. Lys232 is an ATP binding site. In terms of domain architecture, S4 RNA-binding spans 361-427; the sequence is IPAYEIMHEC…GKKKYMIIKV (67 aa).

This sequence belongs to the class-I aminoacyl-tRNA synthetase family. TyrS type 1 subfamily. As to quaternary structure, homodimer.

The protein resides in the cytoplasm. The catalysed reaction is tRNA(Tyr) + L-tyrosine + ATP = L-tyrosyl-tRNA(Tyr) + AMP + diphosphate + H(+). Catalyzes the attachment of tyrosine to tRNA(Tyr) in a two-step reaction: tyrosine is first activated by ATP to form Tyr-AMP and then transferred to the acceptor end of tRNA(Tyr). This chain is Tyrosine--tRNA ligase, found in Syntrophus aciditrophicus (strain SB).